A 196-amino-acid polypeptide reads, in one-letter code: tRNA (pseudouridine(54)-N(1))-methyltransferase (196 aa).

Residue Leu-126 participates in S-adenosyl-L-methionine binding.

This sequence belongs to the methyltransferase superfamily. TrmY family. As to quaternary structure, homodimer.

It is found in the cytoplasm. It catalyses the reaction pseudouridine(54) in tRNA + S-adenosyl-L-methionine = N(1)-methylpseudouridine(54) in tRNA + S-adenosyl-L-homocysteine + H(+). Functionally, specifically catalyzes the N1-methylation of pseudouridine at position 54 (Psi54) in tRNAs. This chain is tRNA (pseudouridine(54)-N(1))-methyltransferase, found in Halobacterium salinarum (strain ATCC 700922 / JCM 11081 / NRC-1) (Halobacterium halobium).